The primary structure comprises 1224 residues: Serine/threonine-protein kinase CST20 (1224 aa).

Residues Met1 to Asn18 show a composition bias toward polar residues. Disordered regions lie at residues Met1–Asn378 and Thr403–Glu464. 2 stretches are compositionally biased toward low complexity: residues Asn57–Ser70 and Asp95–Ser119. Residues His144–Tyr155 show a composition bias toward basic and acidic residues. Composition is skewed to polar residues over residues Asp169–Ser191, Thr201–Ala218, and Pro231–Asp240. Residues Ser242 to Val251 show a composition bias toward low complexity. Composition is skewed to polar residues over residues Ser256–Ser271 and Asp305–Gly324. Composition is skewed to low complexity over residues Asn343–Thr375 and Lys433–Ser462. One can recognise a CRIB domain in the interval Ile469–Gly482. Disordered regions lie at residues Phe539 to Asp825 and Leu861 to Ala913. Over residues Asn544–Asn555 the composition is skewed to polar residues. Residues Ser564–Ala575 are compositionally biased toward gly residues. Over residues Ile598–Lys607 the composition is skewed to polar residues. The segment covering Thr608–Asn622 has biased composition (basic and acidic residues). Positions Ala623–Gln636 are enriched in polar residues. Composition is skewed to low complexity over residues Pro664–Asp677, Ser690–Leu704, and Ser730–Ser743. The span at Gln744–Ala755 shows a compositional bias: polar residues. Pro residues predominate over residues Ala783 to Pro801. The segment covering Leu805–Ser820 has biased composition (polar residues). Over residues Leu861–Arg870 the composition is skewed to basic and acidic residues. Residues Gln871–Ser886 show a composition bias toward polar residues. The Protein kinase domain maps to Tyr947–Ile1199. ATP is bound by residues Ile953–Val961 and Lys977. Asp1067 serves as the catalytic Proton acceptor.

The protein belongs to the protein kinase superfamily. STE Ser/Thr protein kinase family. STE20 subfamily.

It is found in the cytoplasm. The protein localises to the nucleus. The enzyme catalyses L-seryl-[protein] + ATP = O-phospho-L-seryl-[protein] + ADP + H(+). It carries out the reaction L-threonyl-[protein] + ATP = O-phospho-L-threonyl-[protein] + ADP + H(+). Functionally, MAP4K component of the MAPK pathway required for the mating pheromone response, and the regulation of cell polarity and cell cycle. Phosphorylates histone H2B to form H2BS10ph. Required for hyphal formation and virulence. The protein is Serine/threonine-protein kinase CST20 (CST20) of Candida albicans (strain WO-1) (Yeast).